The following is a 78-amino-acid chain: Large ribosomal subunit protein eL20 (78 aa).

This sequence belongs to the eukaryotic ribosomal protein eL20 family. In terms of assembly, part of the 50S ribosomal subunit. Binds 23S rRNA.

The polypeptide is Large ribosomal subunit protein eL20 (Methanothermobacter thermautotrophicus (strain ATCC 29096 / DSM 1053 / JCM 10044 / NBRC 100330 / Delta H) (Methanobacterium thermoautotrophicum)).